Reading from the N-terminus, the 202-residue chain is MKNKKEEKINNLKKEEKINNLKKEEKINNLKKEEKEKNDDVQNKIIDLLEIKLKKSQEKIINMQLKNHEEILKLNYRLNSDIEKSRKFSLEKVIIEFLPIIDNIERALSVIKDKKEAFYLEIINKMNFIFSLLEEILSEFNVSKINEKNISFDPEIHQAMSINYNDEIEDNHVVDVMQSGYMLHKARLLRPAMVIVSKRKNN.

It belongs to the GrpE family. In terms of assembly, homodimer.

The protein resides in the cytoplasm. Functionally, participates actively in the response to hyperosmotic and heat shock by preventing the aggregation of stress-denatured proteins, in association with DnaK and GrpE. It is the nucleotide exchange factor for DnaK and may function as a thermosensor. Unfolded proteins bind initially to DnaJ; upon interaction with the DnaJ-bound protein, DnaK hydrolyzes its bound ATP, resulting in the formation of a stable complex. GrpE releases ADP from DnaK; ATP binding to DnaK triggers the release of the substrate protein, thus completing the reaction cycle. Several rounds of ATP-dependent interactions between DnaJ, DnaK and GrpE are required for fully efficient folding. The protein is Protein GrpE 1 of Buchnera aphidicola subsp. Schizaphis graminum (strain Sg).